Consider the following 595-residue polypeptide: Metacaspase-1 (595 aa).

Active-site residues include His411 and Cys466.

It belongs to the peptidase C14B family. Monomer.

Activated by Ca(2+). In terms of biological role, cysteine protease that cleaves specifically after arginine or lysine residues. The polypeptide is Metacaspase-1 (Plasmodium berghei (strain Anka)).